A 506-amino-acid chain; its full sequence is MTVYNINLGIGWASSGVEYAQAYRAQILRRIQQPAKFIFMDMILADNIQHLTENIGFLDEEIIWLYNYFTDIKIAPTTVTLDQVLAQVAGQPERSEKEGKIVRYFYPQDDQFITCYLRQEDQDSVEHVEYVSRGRLIRKDYFSYVRYASEYFAPHNDAATLYQRRFYHEDGSVAYDMLIEDGQEKLYRFPDRIFYSKAELVRYFLQCLQLQADDVVILDRETGIGQVVFEESQKAKLGVVVHAEHFSENASSDDYILWNNFYDYQFTNADKVDFFIVATEAQKRILEQQFQHYSDKQPQIATIPVGSLDQLTYPKEPRKPYSMITASRLATEKHIDWLVAATVQAHAQLPELTLDIYGKGSEEDKLRRRIEEAGAQDYIRLKGHADLSQIYAGYELYLTASTSEGFGLTLMEAVGSGLPLIGFDVRYGNQTFIDDGKNGYLLPVSSNHVEDQIIAAFVEKIIALFSQGRQQEMSQHSYQVAENYLTSRVEAAWTQLLKEVRDDSAL.

Residues 1-78 (MTVYNINLGI…FTDIKIAPTT (78 aa)) are N-terminus R-fold-1. 16-19 (GVEY) lines the UDP pocket. Residues 79–195 (VTLDQVLAQV…LYRFPDRIFY (117 aa)) are extended beta-sheet domain. The tract at residues 196–306 (SKAELVRYFL…QPQIATIPVG (111 aa)) is C-terminus R-fold-1. His-242 is a binding site for N-acetyl-D-glucosamine. Residues 307-506 (SLDQLTYPKE…LKEVRDDSAL (200 aa)) form an R-fold-2 region. UDP-binding positions include Arg-328, Tyr-357, and 383–385 (GHA). Position 405–407 (405–407 (GFG)) interacts with N-acetyl-D-glucosamine. Position 409 (Thr-409) interacts with UDP.

The protein belongs to the glycosyltransferase group 1 family. Glycosyltransferase 4 subfamily. Forms a heterotetramer with 2 subunits each of GtfA and GtfB. Part of the accessory SecA2/SecY2 protein translocation apparatus required to export cell wall protein GspB.

It localises to the cytoplasm. The protein localises to the cell membrane. The enzyme catalyses L-seryl-[protein] + UDP-N-acetyl-alpha-D-glucosamine = 3-O-[N-acetyl-alpha-D-glucosaminyl]-L-seryl-[protein] + UDP + H(+). It functions in the pathway protein modification; protein glycosylation. Functionally, required for polymorphic O-glycosylation of GspB, a serine-rich repeat cell wall protein encoded upstream in the same operon. Catalyzes the first step in glycosylation by transferring N-acetylglucosamine from UDP-GlcNAc to serine residues in GspB. Part of the accessory SecA2/SecY2 system specifically required to export GspB. Upon coexpression in E.coli with GtfB glycosylates GspB constructs. Glycosylation probably occurs intracellularly. Requires GtfB for glycosylation activity, it has no activity alone. Does not use UDP-glucose as substrate. Has a fast, probably processive glycosylation phase followed by a slower, non-processive phase. The enzyme probably modifies its tertiary conformation by opening and closing its intersubunit interfaces to accomodate the increasingly glycosylated substrate; protein substrate recognition is provided by GtfB. The protein is UDP-N-acetylglucosamine--peptide N-acetylglucosaminyltransferase GtfA subunit of Streptococcus gordonii.